A 460-amino-acid chain; its full sequence is Keratin, type I cytoskeletal 27 (460 aa).

Residues 1 to 83 (MSVRFSSASR…GNEHGLLSGN (83 aa)) are head. The segment at 84 to 119 (EKVTMQNLNDRLASYLDNVRALEEANADLEQKIKGW) is coil 1A. The 316-residue stretch at 84 to 399 (EKVTMQNLND…RLIDGEDGSC (316 aa)) folds into the IF rod domain. Residues 120–141 (YEKFGPGSCRGLDHDYSRYFTV) are linker 1. The interval 142-233 (IDDLRNQIIS…KNHEEEMKAL (92 aa)) is coil 1B. The interval 234 to 256 (QCAAGGNVNVEMNAAPGVDLTVL) is linker 12. The coil 2 stretch occupies residues 257 to 395 (LNNMRAEYEA…ETYCRLIDGE (139 aa)). Positions 396–460 (DGSCTKSKGY…NMKSEQRVPS (65 aa)) are tail. A disordered region spans residues 429–460 (DPRGKVPSSRVHTVEEKSTKVNNMKSEQRVPS). The segment covering 448–460 (KVNNMKSEQRVPS) has biased composition (polar residues).

The protein belongs to the intermediate filament family. As to quaternary structure, heterotetramer of two type I and two type II keratins. Interacts with KRT6A to form filaments.

It localises to the cytoplasm. Essential for the proper assembly of type I and type II keratin protein complexes and formation of keratin intermediate filaments in the inner root sheath (irs). This Capra hircus (Goat) protein is Keratin, type I cytoskeletal 27.